A 415-amino-acid polypeptide reads, in one-letter code: Probable G-protein coupled receptor 19 (415 aa).

At 1–69 (MVFAHRMDNS…LKPGEVATAS (69 aa)) the chain is on the extracellular side. Residues Asn-25 and Asn-52 are each glycosylated (N-linked (GlcNAc...) asparagine). The chain crosses the membrane as a helical span at residues 70–90 (IFFGILWLFSIFGNSLVCLVI). The Cytoplasmic portion of the chain corresponds to 91 to 102 (HRSRRTQSTTNY). A helical membrane pass occupies residues 103–123 (FVVSMACADLLISVASTPFVL). Topologically, residues 124–143 (LQFTTGRWTLGSATCKVVRY) are extracellular. A disulfide bridge links Cys-138 with Cys-210. The chain crosses the membrane as a helical span at residues 144–161 (FQYLTPGVQIYVLLSICI). Topologically, residues 162-182 (DRFYTIVYPLSFKVSREKAKK) are cytoplasmic. Residues 183-203 (MIAASWVFDAGFVTPVLFFYG) traverse the membrane as a helical segment. The Extracellular portion of the chain corresponds to 204–221 (SNWDSHCNYFLPSSWEGT). Residues 222 to 242 (AYTVIHFLVGFVIPSVLIILF) form a helical membrane-spanning segment. The Cytoplasmic segment spans residues 243-277 (YQKVIKYIWRIGTDGRTVRRTMNIVPRTKVKTIKM). The chain crosses the membrane as a helical span at residues 278–298 (FLILNLLFLLSWLPFHVAQLW). Residues 299–309 (HPHEQDYKKSS) are Extracellular-facing. Residues 310-325 (LVFTAITWISFSSSAS) traverse the membrane as a helical segment. The Cytoplasmic portion of the chain corresponds to 326–415 (KPTLYSIYNA…INSNPPNTFV (90 aa)).

Belongs to the G-protein coupled receptor 1 family. As to expression, abundant expression in the brain.

It localises to the cell membrane. Its function is as follows. G-protein coupled receptor that plays a role in the regulation of circadian rhythms and energy metabolism. Participates in maintaining proper circadian gene expression in the suprachiasmatic nucleus (SCN), the locus of the master circadian clock in the brain. May function as a coordinator of aging-associated metabolic dysfunction, stress response, DNA integrity management, and eventual senescence. Upon binding to adropin, modulates mitochondrial energy metabolism via the p44/42-PDK4 signaling pathway, influencing pyruvate dehydrogenase activity. In Homo sapiens (Human), this protein is Probable G-protein coupled receptor 19 (GPR19).